A 221-amino-acid polypeptide reads, in one-letter code: Peptide methionine sulfoxide reductase MsrA (221 aa).

The active site involves C54.

It belongs to the MsrA Met sulfoxide reductase family.

The enzyme catalyses L-methionyl-[protein] + [thioredoxin]-disulfide + H2O = L-methionyl-(S)-S-oxide-[protein] + [thioredoxin]-dithiol. It carries out the reaction [thioredoxin]-disulfide + L-methionine + H2O = L-methionine (S)-S-oxide + [thioredoxin]-dithiol. Its function is as follows. Has an important function as a repair enzyme for proteins that have been inactivated by oxidation. Catalyzes the reversible oxidation-reduction of methionine sulfoxide in proteins to methionine. In Methylobacterium sp. (strain 4-46), this protein is Peptide methionine sulfoxide reductase MsrA.